Consider the following 338-residue polypeptide: 1-aminocyclopropane-1-carboxylate deaminase (338 aa).

Position 51 is an N6-(pyridoxal phosphate)lysine (lysine 51). The active-site Nucleophile is serine 78.

This sequence belongs to the ACC deaminase/D-cysteine desulfhydrase family. Homotrimer. Requires pyridoxal 5'-phosphate as cofactor.

The catalysed reaction is 1-aminocyclopropane-1-carboxylate + H2O = 2-oxobutanoate + NH4(+). In terms of biological role, catalyzes a cyclopropane ring-opening reaction, the irreversible conversion of 1-aminocyclopropane-1-carboxylate (ACC) to ammonia and alpha-ketobutyrate. Allows growth on ACC as a nitrogen source. The polypeptide is 1-aminocyclopropane-1-carboxylate deaminase (Burkholderia cenocepacia (strain HI2424)).